The primary structure comprises 1156 residues: Chromosome partition protein Smc (1156 aa).

37–44 provides a ligand contact to ATP; it reads PNGAGKSN. Positions 167–499 form a coiled coil; sequence SGIGEYERKK…AIEREVRSFS (333 aa). The SMC hinge domain occupies 509–624; the sequence is KGVYGSVSEL…VENFESAKAI (116 aa). Positions 654–1001 form a coiled coil; that stretch reads GELNKRYYEE…EETENKKRKV (348 aa).

This sequence belongs to the SMC family. Homodimer.

The protein resides in the cytoplasm. Required for chromosome condensation and partitioning. This Aquifex aeolicus (strain VF5) protein is Chromosome partition protein Smc.